Consider the following 618-residue polypeptide: DNA mismatch repair protein MutL (618 aa).

Residues A371–P401 are disordered. The segment covering G382–S392 has biased composition (gly residues).

The protein belongs to the DNA mismatch repair MutL/HexB family.

Functionally, this protein is involved in the repair of mismatches in DNA. It is required for dam-dependent methyl-directed DNA mismatch repair. May act as a 'molecular matchmaker', a protein that promotes the formation of a stable complex between two or more DNA-binding proteins in an ATP-dependent manner without itself being part of a final effector complex. The protein is DNA mismatch repair protein MutL of Salmonella arizonae (strain ATCC BAA-731 / CDC346-86 / RSK2980).